A 298-amino-acid polypeptide reads, in one-letter code: ATP synthase gamma chain (298 aa).

Belongs to the ATPase gamma chain family. F-type ATPases have 2 components, CF(1) - the catalytic core - and CF(0) - the membrane proton channel. CF(1) has five subunits: alpha(3), beta(3), gamma(1), delta(1), epsilon(1). CF(0) has three main subunits: a, b and c.

It is found in the cell inner membrane. Produces ATP from ADP in the presence of a proton gradient across the membrane. The gamma chain is believed to be important in regulating ATPase activity and the flow of protons through the CF(0) complex. The polypeptide is ATP synthase gamma chain (Francisella philomiragia subsp. philomiragia (strain ATCC 25017 / CCUG 19701 / FSC 153 / O#319-036)).